Here is a 152-residue protein sequence, read N- to C-terminus: TOMM20-like protein 1 (152 aa).

Residues 1 to 9 (MPSVRSLLR) are Mitochondrial intermembrane-facing. The helical transmembrane segment at 10–29 (LLAAAAACGAFAFLGYCIYL) threads the bilayer. The Cytoplasmic portion of the chain corresponds to 30–152 (NRKRRGDPAF…EQDCLEDDPD (123 aa)). The interval 43–62 (LRDKRRAEPQKAEEQGTQLW) is disordered. Positions 47 to 56 (RRAEPQKAEE) are enriched in basic and acidic residues.

Belongs to the Tom20 family.

It localises to the mitochondrion outer membrane. This Homo sapiens (Human) protein is TOMM20-like protein 1 (TOMM20L).